The primary structure comprises 468 residues: Cysteine--tRNA ligase (468 aa).

Cys-33 is a Zn(2+) binding site. Residues Ala-35–His-45 carry the 'HIGH' region motif. Cys-211, His-236, and Glu-240 together coordinate Zn(2+). Positions Lys-267–Ser-271 match the 'KMSKS' region motif. Lys-270 contributes to the ATP binding site.

The protein belongs to the class-I aminoacyl-tRNA synthetase family. In terms of assembly, monomer. It depends on Zn(2+) as a cofactor.

Its subcellular location is the cytoplasm. The enzyme catalyses tRNA(Cys) + L-cysteine + ATP = L-cysteinyl-tRNA(Cys) + AMP + diphosphate. The chain is Cysteine--tRNA ligase from Mycobacterium ulcerans (strain Agy99).